Here is a 112-residue protein sequence, read N- to C-terminus: Peptidyl-tRNA hydrolase (112 aa).

A disordered region spans residues 64–99 (EEAKRAGLPTGLISDAGRTQLEPGTPTALAIGPAPD).

It belongs to the PTH2 family.

The protein resides in the cytoplasm. It catalyses the reaction an N-acyl-L-alpha-aminoacyl-tRNA + H2O = an N-acyl-L-amino acid + a tRNA + H(+). Functionally, the natural substrate for this enzyme may be peptidyl-tRNAs which drop off the ribosome during protein synthesis. In Halobacterium salinarum (strain ATCC 29341 / DSM 671 / R1), this protein is Peptidyl-tRNA hydrolase.